The primary structure comprises 318 residues: Protein-methionine-sulfoxide reductase catalytic subunit MsrP (318 aa).

The segment at residues 1–40 (MNRFTRYDVTPEVIFNQRRQIIKAMGLGAAALSLPNIGFA) is a signal peptide (tat-type signal). Residues Asn-72, 75–76 (YE), Cys-130, Thr-165, Asn-217, Arg-222, and 233–235 (SIK) each bind Mo-molybdopterin.

The protein belongs to the MsrP family. In terms of assembly, heterodimer of a catalytic subunit (MsrP) and a heme-binding subunit (MsrQ). It depends on Mo-molybdopterin as a cofactor. Predicted to be exported by the Tat system. The position of the signal peptide cleavage has not been experimentally proven.

It localises to the periplasm. The catalysed reaction is L-methionyl-[protein] + a quinone + H2O = L-methionyl-(S)-S-oxide-[protein] + a quinol. The enzyme catalyses L-methionyl-[protein] + a quinone + H2O = L-methionyl-(R)-S-oxide-[protein] + a quinol. Its function is as follows. Part of the MsrPQ system that repairs oxidized periplasmic proteins containing methionine sulfoxide residues (Met-O), using respiratory chain electrons. Thus protects these proteins from oxidative-stress damage caused by reactive species of oxygen and chlorine generated by the host defense mechanisms. MsrPQ is essential for the maintenance of envelope integrity under bleach stress, rescuing a wide series of structurally unrelated periplasmic proteins from methionine oxidation. The catalytic subunit MsrP is non-stereospecific, being able to reduce both (R-) and (S-) diastereoisomers of methionine sulfoxide. The sequence is that of Protein-methionine-sulfoxide reductase catalytic subunit MsrP from Actinobacillus pleuropneumoniae serotype 3 (strain JL03).